Reading from the N-terminus, the 185-residue chain is Large ribosomal subunit protein uL5 (185 aa).

The protein belongs to the universal ribosomal protein uL5 family. As to quaternary structure, part of the 50S ribosomal subunit; part of the 5S rRNA/L5/L18/L25 subcomplex. Contacts the 5S rRNA and the P site tRNA. Forms a bridge to the 30S subunit in the 70S ribosome.

Functionally, this is one of the proteins that bind and probably mediate the attachment of the 5S RNA into the large ribosomal subunit, where it forms part of the central protuberance. In the 70S ribosome it contacts protein S13 of the 30S subunit (bridge B1b), connecting the 2 subunits; this bridge is implicated in subunit movement. Contacts the P site tRNA; the 5S rRNA and some of its associated proteins might help stabilize positioning of ribosome-bound tRNAs. This chain is Large ribosomal subunit protein uL5, found in Nitrobacter winogradskyi (strain ATCC 25391 / DSM 10237 / CIP 104748 / NCIMB 11846 / Nb-255).